A 191-amino-acid chain; its full sequence is Large ribosomal subunit protein bL9 (191 aa).

The interval 171–191 (EDALKPEDFFNPEAELESEEE) is disordered.

The protein belongs to the bacterial ribosomal protein bL9 family.

Functionally, binds to the 23S rRNA. The sequence is that of Large ribosomal subunit protein bL9 from Rhizobium meliloti (strain 1021) (Ensifer meliloti).